The primary structure comprises 854 residues: Leucine--tRNA ligase (854 aa).

Residues 1–32 (MARRDMAAETMDPRASTEPSPNEPREPARYDH) form a disordered region. The span at 23-32 (EPREPARYDH) shows a compositional bias: basic and acidic residues. Residues 69–80 (PYPSGSGLHVGH) carry the 'HIGH' region motif. Residues 633 to 637 (KMSKS) carry the 'KMSKS' region motif. ATP is bound at residue K636.

Belongs to the class-I aminoacyl-tRNA synthetase family.

The protein localises to the cytoplasm. The catalysed reaction is tRNA(Leu) + L-leucine + ATP = L-leucyl-tRNA(Leu) + AMP + diphosphate. The protein is Leucine--tRNA ligase of Sorangium cellulosum (strain So ce56) (Polyangium cellulosum (strain So ce56)).